The chain runs to 1032 residues: Serine/threonine-protein kinase ppk31 (1032 aa).

Residues 3 to 72 (NPEQLKRILS…KATDNLFRKS (70 aa)) form the PAS domain. Positions 528 to 877 (FILLKEINRG…YQEIKKHPFF (350 aa)) constitute a Protein kinase domain. ATP contacts are provided by residues 534–542 (INRGAYGRV) and Lys557. The Proton acceptor role is filled by Asp652. The segment at 938–963 (PKATPADSGTETSNSAAFSASEEETT) is disordered. The segment covering 947–957 (TETSNSAAFSA) has biased composition (low complexity).

Belongs to the protein kinase superfamily. Ser/Thr protein kinase family.

The protein localises to the cytoplasm. It catalyses the reaction L-seryl-[protein] + ATP = O-phospho-L-seryl-[protein] + ADP + H(+). It carries out the reaction L-threonyl-[protein] + ATP = O-phospho-L-threonyl-[protein] + ADP + H(+). Functionally, has a role in meiosis. This Schizosaccharomyces pombe (strain 972 / ATCC 24843) (Fission yeast) protein is Serine/threonine-protein kinase ppk31 (ppk31).